The following is a 237-amino-acid chain: DCN1-like protein 5 (237 aa).

Ser41 carries the phosphoserine modification. In terms of domain architecture, DCUN1 spans 46–232 (FSRKKCLAWF…LLDEFVEWQK (187 aa)).

As to quaternary structure, part of a complex that contains DCUN1D5, CUL1 and RBX1; this interaction is bridged by CUL1. Interacts (via the DCUN1 domain) with the unneddylated cullins: interacts with CUL1, CUL2, CUL3, CUL4A, CUL4B and CUL5; these interactions promote the cullin neddylation and the identity of the cullin dictates the affinity of the interaction. Interacts (via DCUN1 domain) with UBE2M (N-terminally acetylated form) and probably with UBE2F (N-terminally acetylated form). May also interact with regulators or subunits of cullin-RING ligases such as RBX1, RNF7, ELOB and DDB1; these interactions are bridged by cullins. Interacts with CAND1; this interaction is bridged by cullins and strongly inhibits the neddylation of cullins. These CAND-cullin-DCNL complexes can only be neddylated in the presence of a substrate adapter. Phosphorylation at Ser-41 is independent of cullin's interaction. Phosphorylated in response to both TICAM1 and MYD88 dependent Toll-like receptor (TLR) pathway activation. Phosphorylated in response to IL1B stimulation.

Its subcellular location is the nucleus. The protein localises to the cytoplasm. It is found in the cytoskeleton. It localises to the spindle. In terms of biological role, contributes to the neddylation of all cullins by transferring NEDD8 from N-terminally acetylated NEDD8-conjugating E2s enzyme to different cullin C-terminal domain-RBX complexes which is necessary for the activation of cullin-RING E3 ubiquitin ligases (CRLs). May play a role in DNA damage response and may participate in cell proliferation and anchorage-independent cell growth. The chain is DCN1-like protein 5 from Rattus norvegicus (Rat).